Reading from the N-terminus, the 689-residue chain is Zinc finger protein 185 (689 aa).

Disordered stretches follow at residues 1 to 253 and 298 to 534; these read MSIS…GRTK and APDV…SCTS. Over residues 35–52 the composition is skewed to basic and acidic residues; it reads LKGDKSWITKQDESEGRT. The residue at position 66 (S66) is a Phosphoserine. Positions 95–114 are enriched in polar residues; that stretch reads IDSSSQPQQQFPKANGTPKS. S153 carries the post-translational modification Phosphoserine. Over residues 157-166 the composition is skewed to acidic residues; it reads DTEEEEEEEV. P206 carries the phosphoserine modification. 2 stretches are compositionally biased toward basic and acidic residues: residues 217–232 and 310–331; these read KRVE…EKSQ and NKDK…EEAF. A compositionally biased stretch (polar residues) spans 338-349; sequence AARSSAQLSDGN. Composition is skewed to low complexity over residues 373 to 382 and 434 to 444; these read SSSATSVSAV and DPAVPAQQPAD. T447 carries the phosphothreonine modification. Residues 448–458 show a composition bias toward polar residues; that stretch reads PERQSSPSGSE. A phosphoserine mark is found at S453 and S465. The segment covering 504 to 524 has biased composition (polar residues); the sequence is PTQQPADPSTPEQQNSPSGSE. The LIM zinc-binding domain maps to 627–689; sequence GICTYCNREI…HCGKCYEKLF (63 aa).

As to expression, expressed in placenta, pancreas and kidney. Also expressed in prostate, testis, ovary and blood.

Its subcellular location is the cytoplasm. It is found in the cytoskeleton. It localises to the cell junction. The protein localises to the focal adhesion. In terms of biological role, may be involved in the regulation of cellular proliferation and/or differentiation. The chain is Zinc finger protein 185 (ZNF185) from Homo sapiens (Human).